A 342-amino-acid polypeptide reads, in one-letter code: MRFSDSVVLIFGGTTGIGLMTTIDFIIHNTSHIILASRSKWKWKRAIEKIQNIFGDLVNLSNEFNISVLNSTVEYIPCDIRIENDVKQTIQKTIDKYHYINVYFNNAGIQPTTGHTDGDITEIEIPSEKLFDGTIVYKISQNNSNNDNLNNDNSNNDNSSVCSTPASSYCENPIATFIMGMTFCLKHEVKFALEQKSNIPVSIINMSSRNGVNIPSSDRPIYSACKAFIHSMTQTIATQSAKLGIEKNRSIRVNCIAPGPILTPLEIPIFLPDKKNVFEPLSNLELQQFQEIGSHGVPMKRTGTTNEISPTVLFLADYNQSSYITGSTITIDGGYTASPLIG.

9 to 31 (LIFGGTTGIGLMTTIDFIIHNTS) is an NADP(+) binding site. Ser-208 provides a ligand contact to substrate. Tyr-222 acts as the Proton acceptor in catalysis.

Belongs to the short-chain dehydrogenases/reductases (SDR) family.

This is an uncharacterized protein from Acanthamoeba polyphaga (Amoeba).